Consider the following 1035-residue polypeptide: Tyrosine-protein kinase-like otk (1035 aa).

A signal peptide spans 1 to 23 (MDMDVMMISMCILASTLMAPGWA). 5 consecutive Ig-like C2-type domains span residues 24-109 (STSG…REAS), 110-199 (PPAK…RVMS), 251-365 (PEDL…APLN), 368-464 (PGLL…VSIN), and 469-559 (PKFS…VQLV). Residues 24-582 (STSGFLRVPQ…GGDGFLVTRA (559 aa)) are Extracellular-facing. 5 disulfides stabilise this stretch: Cys47-Cys96, Cys138-Cys188, Cys276-Cys354, Cys399-Cys448, and Cys491-Cys543. N-linked (GlcNAc...) asparagine glycans are attached at residues Asn336, Asn418, Asn430, Asn445, Asn513, and Asn525. A helical membrane pass occupies residues 583–603 (VLITMTVALAYIVLVVGLMLW). The Cytoplasmic segment spans residues 604–1035 (CRYRRQARKA…SKAMQSVAEK (432 aa)). Disordered stretches follow at residues 623–683 (AGGD…KSVY) and 721–775 (AQSD…KEEE). Residues 658 to 676 (KSNGDAQKSDDTACSQQSR) show a composition bias toward polar residues. The residue at position 681 (Ser681) is a Phosphoserine. Residues 693–1029 (LSELLQIGRG…QLGSALSKAM (337 aa)) enclose the Protein kinase; inactive domain. The span at 723-734 (SDKDADTEKQHS) shows a compositional bias: basic and acidic residues. Over residues 766–775 (DDIEEIKEEE) the composition is skewed to acidic residues.

This sequence belongs to the protein kinase superfamily. Tyr protein kinase family. Insulin receptor subfamily. Interacts with plexA; component of a receptor complex that mediates the repulsive signaling in response to Semaphorin ligands.

Its subcellular location is the cell membrane. In terms of biological role, acts as a calcium-dependent, homophilic cell adhesion molecule that regulates neural recognition during the development of the nervous system. Component of the repulsive Plexin signaling response to regulate motor axon guidance at the embryonic stage. Also component of a receptor complex that is required in the adult visual system to innervate the lamina layer; specific targeting of R1-R6 axons. In Drosophila persimilis (Fruit fly), this protein is Tyrosine-protein kinase-like otk.